We begin with the raw amino-acid sequence, 261 residues long: Glutamate 5-kinase (261 aa).

K7 is a binding site for ATP. Substrate is bound by residues S46, D131, and N147. ATP contacts are provided by residues 167–168 and 209–215; these read SD and TGGIVTK.

Belongs to the glutamate 5-kinase family.

It is found in the cytoplasm. The enzyme catalyses L-glutamate + ATP = L-glutamyl 5-phosphate + ADP. Its pathway is amino-acid biosynthesis; L-proline biosynthesis; L-glutamate 5-semialdehyde from L-glutamate: step 1/2. Its function is as follows. Catalyzes the transfer of a phosphate group to glutamate to form L-glutamate 5-phosphate. This is Glutamate 5-kinase from Wolinella succinogenes (strain ATCC 29543 / DSM 1740 / CCUG 13145 / JCM 31913 / LMG 7466 / NCTC 11488 / FDC 602W) (Vibrio succinogenes).